Here is a 56-residue protein sequence, read N- to C-terminus: Large ribosomal subunit protein bL32c (56 aa).

Positions Met-1–Trp-20 are enriched in basic residues. The interval Met-1–Ala-28 is disordered.

The protein belongs to the bacterial ribosomal protein bL32 family.

The protein resides in the plastid. The protein localises to the chloroplast. This chain is Large ribosomal subunit protein bL32c (rpl32), found in Mesostigma viride (Green alga).